A 206-amino-acid polypeptide reads, in one-letter code: Carbonic anhydrase (206 aa).

An Isoglutamyl lysine isopeptide (Lys-Gln) (interchain with Q-Cter in protein Pup) cross-link involves residue Lys-11. Zn(2+) is bound by residues Cys-51, Asp-53, His-104, and Cys-107.

The protein belongs to the beta-class carbonic anhydrase family. As to quaternary structure, homotetramer. It depends on Zn(2+) as a cofactor.

The enzyme catalyses hydrogencarbonate + H(+) = CO2 + H2O. Functionally, catalyzes the reversible hydration of carbon dioxide to form bicarbonate. This chain is Carbonic anhydrase (cynT), found in Mycolicibacterium smegmatis (strain ATCC 700084 / mc(2)155) (Mycobacterium smegmatis).